The sequence spans 513 residues: ATP synthase subunit alpha (513 aa).

Position 169-176 (169-176 (GDRQIGKT)) interacts with ATP.

Belongs to the ATPase alpha/beta chains family. In terms of assembly, F-type ATPases have 2 components, CF(1) - the catalytic core - and CF(0) - the membrane proton channel. CF(1) has five subunits: alpha(3), beta(3), gamma(1), delta(1), epsilon(1). CF(0) has three main subunits: a(1), b(2) and c(9-12). The alpha and beta chains form an alternating ring which encloses part of the gamma chain. CF(1) is attached to CF(0) by a central stalk formed by the gamma and epsilon chains, while a peripheral stalk is formed by the delta and b chains.

The protein resides in the cell inner membrane. The catalysed reaction is ATP + H2O + 4 H(+)(in) = ADP + phosphate + 5 H(+)(out). Its function is as follows. Produces ATP from ADP in the presence of a proton gradient across the membrane. The alpha chain is a regulatory subunit. The protein is ATP synthase subunit alpha of Francisella tularensis subsp. novicida (strain U112).